The following is a 424-amino-acid chain: Deoxyguanosinetriphosphate triphosphohydrolase-like protein (424 aa).

A disordered region spans residues 1–27; sequence MYPYSDADAFRRQPERAKSSQLRTSAV. A compositionally biased stretch (basic and acidic residues) spans 8–18; that stretch reads DAFRRQPERAK. Positions 67 to 217 constitute an HD domain; sequence RLTHSLEVAQ…MDFSDDIAYS (151 aa).

It belongs to the dGTPase family. Type 2 subfamily.

The sequence is that of Deoxyguanosinetriphosphate triphosphohydrolase-like protein (dgt) from Corynebacterium glutamicum (strain ATCC 13032 / DSM 20300 / JCM 1318 / BCRC 11384 / CCUG 27702 / LMG 3730 / NBRC 12168 / NCIMB 10025 / NRRL B-2784 / 534).